The following is a 390-amino-acid chain: D-alanyl-D-alanine carboxypeptidase DacD (390 aa).

An N-terminal signal peptide occupies residues methionine 1–alanine 23. Residue serine 65 is the Acyl-ester intermediate of the active site. Catalysis depends on lysine 68, which acts as the Proton acceptor. Serine 131 is a catalytic residue. A substrate-binding site is contributed by lysine 234.

This sequence belongs to the peptidase S11 family.

Its subcellular location is the cell inner membrane. It catalyses the reaction Preferential cleavage: (Ac)2-L-Lys-D-Ala-|-D-Ala. Also transpeptidation of peptidyl-alanyl moieties that are N-acyl substituents of D-alanine.. It functions in the pathway cell wall biogenesis; peptidoglycan biosynthesis. Its function is as follows. Removes C-terminal D-alanyl residues from sugar-peptide cell wall precursors. The polypeptide is D-alanyl-D-alanine carboxypeptidase DacD (dacD) (Salmonella typhimurium (strain LT2 / SGSC1412 / ATCC 700720)).